We begin with the raw amino-acid sequence, 370 residues long: Probable protein phosphatase 2C 67 (370 aa).

Positions 35-344 (TFGEFSMAMI…DDITVIVVYL (310 aa)) constitute a PPM-type phosphatase domain. 4 residues coordinate Mn(2+): Asp-77, Gly-78, Asp-276, and Asp-335.

Belongs to the PP2C family. In terms of assembly, interacts with SAUR19. Interacts with AHA2 at the plasma membrane. The cofactor is Mg(2+). It depends on Mn(2+) as a cofactor.

The protein resides in the cell membrane. It carries out the reaction O-phospho-L-seryl-[protein] + H2O = L-seryl-[protein] + phosphate. The enzyme catalyses O-phospho-L-threonyl-[protein] + H2O = L-threonyl-[protein] + phosphate. Functionally, dephosphorylates and represses plasma membrane H(+)-ATPases (PM H(+)-ATPases, e.g. AHA1 and AHA2), thus influencing negatively plant growth and fitness. Promotes the apical hook maintenance of etiolated seedlings. The sequence is that of Probable protein phosphatase 2C 67 from Arabidopsis thaliana (Mouse-ear cress).